A 160-amino-acid polypeptide reads, in one-letter code: 6,7-dimethyl-8-ribityllumazine synthase (160 aa).

5-amino-6-(D-ribitylamino)uracil is bound by residues Phe-28, 62 to 64, and 86 to 88; these read ALE and AVI. 91–92 provides a ligand contact to (2S)-2-hydroxy-3-oxobutyl phosphate; the sequence is ET. The active-site Proton donor is the His-94. Asn-119 is a 5-amino-6-(D-ribitylamino)uracil binding site. A (2S)-2-hydroxy-3-oxobutyl phosphate-binding site is contributed by Arg-133.

This sequence belongs to the DMRL synthase family.

It catalyses the reaction (2S)-2-hydroxy-3-oxobutyl phosphate + 5-amino-6-(D-ribitylamino)uracil = 6,7-dimethyl-8-(1-D-ribityl)lumazine + phosphate + 2 H2O + H(+). The protein operates within cofactor biosynthesis; riboflavin biosynthesis; riboflavin from 2-hydroxy-3-oxobutyl phosphate and 5-amino-6-(D-ribitylamino)uracil: step 1/2. Functionally, catalyzes the formation of 6,7-dimethyl-8-ribityllumazine by condensation of 5-amino-6-(D-ribitylamino)uracil with 3,4-dihydroxy-2-butanone 4-phosphate. This is the penultimate step in the biosynthesis of riboflavin. The chain is 6,7-dimethyl-8-ribityllumazine synthase from Nitrosospira multiformis (strain ATCC 25196 / NCIMB 11849 / C 71).